The chain runs to 1177 residues: Lysylphosphatidylglycerol biosynthesis bifunctional protein LysX (1177 aa).

Disordered regions lie at residues 1-40 and 61-85; these read MRRAGRSRQFSSVEEAFSTSAARPGPRGRRSGRENTAKFV and VTLASPGSRSGSGPRSGPRLGPRNR. The phosphatidylglycerol lysyltransferase stretch occupies residues 1–676; that stretch reads MRRAGRSRQF…LLHHDGSAPD (676 aa). Residues 65–85 are compositionally biased toward low complexity; that stretch reads SPGSRSGSGPRSGPRLGPRNR. Transmembrane regions (helical) follow at residues 93–113, 135–155, 159–179, 189–209, 227–247, and 281–301; these read VPAAAGWTVGVIATVSLLGSV, FPDTSIAWSFVLALLAAALTA, IAWLLLLGNMILAAALNVADI, IFGENLGFAVHIVAIVLLVLA, AVLVAGDVVGILVSWGLVELF, and VFLNAIFGLFGALALIMATIV. The interval 673 to 693 is disordered; that stretch reads SAPDVSGLRPERTDAEEARSR. The tract at residues 677–1177 is lysine--tRNA ligase; the sequence is VSGLRPERTD…TLPFPLAKPH (501 aa). The span at 681–693 shows a compositional bias: basic and acidic residues; sequence RPERTDAEEARSR. The OB DNA-binding region spans 738-816; it reads ITVAGRILRI…SLIVTDWRMI (79 aa). Asp-1089 and Glu-1096 together coordinate Mg(2+).

The protein in the N-terminal section; belongs to the LPG synthetase family. This sequence in the C-terminal section; belongs to the class-II aminoacyl-tRNA synthetase family. The cofactor is Mg(2+).

The protein resides in the cell membrane. It carries out the reaction tRNA(Lys) + L-lysine + ATP = L-lysyl-tRNA(Lys) + AMP + diphosphate. It catalyses the reaction L-lysyl-tRNA(Lys) + a 1,2-diacyl-sn-glycero-3-phospho-(1'-sn-glycerol) = a 1,2-diacyl-sn-glycero-3-phospho-1'-(3'-O-L-lysyl)-sn-glycerol + tRNA(Lys). Catalyzes the production of L-lysyl-tRNA(Lys)transfer and the transfer of a lysyl group from L-lysyl-tRNA(Lys) to membrane-bound phosphatidylglycerol (PG), which produces lysylphosphatidylglycerol (LPG), one of the components of the bacterial membrane with a positive net charge. LPG synthesis contributes to the resistance to cationic antimicrobial peptides (CAMPs) and likely protects M.tuberculosis against the CAMPs produced by competiting microorganisms (bacteriocins). In fact, the modification of anionic phosphatidylglycerol with positively charged L-lysine results in repulsion of the peptides. This is Lysylphosphatidylglycerol biosynthesis bifunctional protein LysX (lysX) from Mycolicibacterium paratuberculosis (strain ATCC BAA-968 / K-10) (Mycobacterium paratuberculosis).